Reading from the N-terminus, the 37-residue chain is MKVRASVKKICANCRLIRRKRKILVICVNPKHKQRQG.

Belongs to the bacterial ribosomal protein bL36 family.

It is found in the plastid. It localises to the chloroplast. In Stigeoclonium helveticum (Green alga), this protein is Large ribosomal subunit protein bL36c.